The chain runs to 125 residues: Large ribosomal subunit protein uL22 (125 aa).

The protein belongs to the universal ribosomal protein uL22 family. As to quaternary structure, part of the 50S ribosomal subunit.

This protein binds specifically to 23S rRNA; its binding is stimulated by other ribosomal proteins, e.g. L4, L17, and L20. It is important during the early stages of 50S assembly. It makes multiple contacts with different domains of the 23S rRNA in the assembled 50S subunit and ribosome. Its function is as follows. The globular domain of the protein is located near the polypeptide exit tunnel on the outside of the subunit, while an extended beta-hairpin is found that lines the wall of the exit tunnel in the center of the 70S ribosome. The polypeptide is Large ribosomal subunit protein uL22 (Thermobifida fusca (strain YX)).